A 352-amino-acid chain; its full sequence is C-C chemokine receptor type 5 (352 aa).

Over 1–30 (MDYQVSSPIYDIDYGASEPCRKTDVKQMGA) the chain is Extracellular. Position 3 is a sulfotyrosine (tyrosine 3). O-linked (GalNAc...) serine glycosylation is found at serine 6 and serine 7. Tyrosine 10 and tyrosine 14 each carry sulfotyrosine. 2 cysteine pairs are disulfide-bonded: cysteine 20–cysteine 269 and cysteine 101–cysteine 178. The helical transmembrane segment at 31-58 (HLLPPLYSMVFLFGFVGNMLVVLILVNC) threads the bilayer. At 59–68 (KRPKSMTDIY) the chain is on the cytoplasmic side. A helical membrane pass occupies residues 69–89 (LLNLAISDLLFLFTVPFWAHY). The Extracellular segment spans residues 90–102 (AAGQWDFGNTMCQ). Residues 103 to 124 (FLTGLYFIGFFSGIFFIILLTI) form a helical membrane-spanning segment. Over 125-141 (DRYLAIVHAVFALKART) the chain is Cytoplasmic. The helical transmembrane segment at 142-166 (VTFGVMTSVITWVVAVFASLPGIIF) threads the bilayer. The Extracellular portion of the chain corresponds to 167 to 198 (TRSQKEGYHYTCSPHFPFGQYQFWKNFETLKM). A helical transmembrane segment spans residues 199-218 (VILGLVLPLLVMVICYSGIL). The Cytoplasmic portion of the chain corresponds to 219-235 (KTLLRCRNEKKRHRAVR). Residues 236-260 (LIFTIMIVYFLFWAPYNIVLLLNTY) traverse the membrane as a helical segment. At 261-277 (QEFFGLNNCSSSNRLDQ) the chain is on the extracellular side. A helical transmembrane segment spans residues 278-301 (AMQVTETLGMTHCCVNPIIYAFVG). The Cytoplasmic portion of the chain corresponds to 302–352 (EKFRNYLLVFFQKHIAKCFCECCSIFQKEAPERANSVYTRSTGEQEISVGL). S-palmitoyl cysteine attachment occurs at residues cysteine 321, cysteine 323, and cysteine 324. Serine 337, serine 342, and serine 349 each carry phosphoserine; by BARK1.

This sequence belongs to the G-protein coupled receptor 1 family. Interacts with PRAF2. Efficient ligand binding to CCL3/MIP-1alpha and CCL4/MIP-1beta requires sulfation, O-glycosylation and sialic acid modifications. Glycosylation on Ser-6 is required for efficient binding of CCL4. Interacts with GRK2. Interacts with ARRB1 and ARRB2. Interacts with CNIH4. Interacts with S100A4; this interaction stimulates T-lymphocyte chemotaxis. In terms of processing, sulfated on at least 2 of the N-terminal tyrosines. Sulfation is required for efficient binding of the chemokines, CCL3 and CCL4. Palmitoylation in the C-terminal is important for cell surface expression. Post-translationally, phosphorylation on serine residues in the C-terminal is stimulated by binding CC chemokines especially by APO-RANTES. In terms of processing, O-glycosylated, but not N-glycosylated. Ser-6 appears to be the major site even if Ser-7 may be also O-glycosylated. Also sialylated glycans present which contribute to chemokine binding. Ser-17 may also be glycosylated and, if so, with small moieties such as a T-antigen.

It is found in the cell membrane. Its function is as follows. Receptor for a number of inflammatory CC-chemokines including CCL3/MIP-1-alpha, CCL4/MIP-1-beta and RANTES and subsequently transduces a signal by increasing the intracellular calcium ion level. May play a role in the control of granulocytic lineage proliferation or differentiation. Participates in T-lymphocyte migration to the infection site by acting as a chemotactic receptor. This is C-C chemokine receptor type 5 (CCR5) from Ateles geoffroyi (Black-handed spider monkey).